A 316-amino-acid chain; its full sequence is Acetyl-coenzyme A carboxylase carboxyl transferase subunit beta, chloroplastic (316 aa).

Positions 47–316 (LWTRCDNCEN…CKKFQNSFFK (270 aa)) constitute a CoA carboxyltransferase N-terminal domain. The Zn(2+) site is built by C51, C54, C70, and C73. A C4-type zinc finger spans residues 51–73 (CDNCENMLYVRFLRQNKRICEEC).

It belongs to the AccD/PCCB family. Acetyl-CoA carboxylase is a heterohexamer composed of biotin carboxyl carrier protein, biotin carboxylase and 2 subunits each of ACCase subunit alpha and ACCase plastid-coded subunit beta (accD). Zn(2+) serves as cofactor.

It localises to the plastid. It is found in the chloroplast stroma. It catalyses the reaction N(6)-carboxybiotinyl-L-lysyl-[protein] + acetyl-CoA = N(6)-biotinyl-L-lysyl-[protein] + malonyl-CoA. The protein operates within lipid metabolism; malonyl-CoA biosynthesis; malonyl-CoA from acetyl-CoA: step 1/1. In terms of biological role, component of the acetyl coenzyme A carboxylase (ACC) complex. Biotin carboxylase (BC) catalyzes the carboxylation of biotin on its carrier protein (BCCP) and then the CO(2) group is transferred by the transcarboxylase to acetyl-CoA to form malonyl-CoA. This chain is Acetyl-coenzyme A carboxylase carboxyl transferase subunit beta, chloroplastic, found in Marchantia polymorpha (Common liverwort).